The following is a 155-amino-acid chain: Deoxyuridine 5'-triphosphate nucleotidohydrolase (155 aa).

Residues 74 to 76, Asn-87, and 91 to 93 contribute to the substrate site; these read RSG and TID.

It belongs to the dUTPase family. The cofactor is Mg(2+).

It catalyses the reaction dUTP + H2O = dUMP + diphosphate + H(+). The protein operates within pyrimidine metabolism; dUMP biosynthesis; dUMP from dCTP (dUTP route): step 2/2. Functionally, this enzyme is involved in nucleotide metabolism: it produces dUMP, the immediate precursor of thymidine nucleotides and it decreases the intracellular concentration of dUTP so that uracil cannot be incorporated into DNA. The chain is Deoxyuridine 5'-triphosphate nucleotidohydrolase from Cereibacter sphaeroides (strain KD131 / KCTC 12085) (Rhodobacter sphaeroides).